The sequence spans 310 residues: Putative S-adenosyl-L-methionine-dependent methyltransferase Mb0151 (310 aa).

Residues D132 and 161–162 contribute to the S-adenosyl-L-methionine site; that span reads DL.

Belongs to the UPF0677 family.

Functionally, exhibits S-adenosyl-L-methionine-dependent methyltransferase activity. In Mycobacterium bovis (strain ATCC BAA-935 / AF2122/97), this protein is Putative S-adenosyl-L-methionine-dependent methyltransferase Mb0151.